Reading from the N-terminus, the 372-residue chain is AA9 family lytic polysaccharide monooxygenase C (372 aa).

An N-terminal signal peptide occupies residues 1 to 16 (MFRSALFLLLAPLALS). Cu(2+) contacts are provided by H17 and H99. The cysteines at positions 59 and 189 are disulfide-linked. The O2 site is built by H174 and Q184. Y186 contributes to the Cu(2+) binding site.

It belongs to the polysaccharide monooxygenase AA9 family. Cu(2+) serves as cofactor.

Its subcellular location is the secreted. The enzyme catalyses [(1-&gt;4)-beta-D-glucosyl]n+m + reduced acceptor + O2 = 4-dehydro-beta-D-glucosyl-[(1-&gt;4)-beta-D-glucosyl]n-1 + [(1-&gt;4)-beta-D-glucosyl]m + acceptor + H2O.. In terms of biological role, lytic polysaccharide monooxygenase (LPMO) that depolymerizes crystalline and amorphous polysaccharides via the oxidation of scissile alpha- or beta-(1-4)-glycosidic bonds, yielding C1 or C4 oxidation products. Catalysis by LPMOs requires the reduction of the active-site copper from Cu(II) to Cu(I) by a reducing agent and H(2)O(2) or O(2) as a cosubstrate. This chain is AA9 family lytic polysaccharide monooxygenase C, found in Aspergillus tamarii.